The following is a 555-amino-acid chain: Transmembrane protein 87B (555 aa).

The first 42 residues, 1–42 (MVAACRSVAGLLPRRRRCFPARAPLLRVALCLLCWTPAAVRA), serve as a signal peptide directing secretion. The Lumenal portion of the chain corresponds to 43–214 (VPELGLWLET…PHGYISASDW (172 aa)). Residues N68 and N197 are each glycosylated (N-linked (GlcNAc...) asparagine). The helical transmembrane segment at 215 to 235 (PLMIFYMVMCIVYILYGILWL) threads the bilayer. The Cytoplasmic portion of the chain corresponds to 236–247 (TWSACYWKDILR). Residues 248-268 (IQFWIAAVIFLGMLEKAVFYS) form a helical membrane-spanning segment. Residues 269-299 (EYQNISNTGLSTQGLLIFAELISAIKRTLAR) lie on the Lumenal side of the membrane. N272 carries N-linked (GlcNAc...) asparagine glycosylation. A helical membrane pass occupies residues 300–320 (LLVIIVSLGYGIVKPRLGTVM). At 321 to 322 (HR) the chain is on the cytoplasmic side. Residues 323–343 (VIGLGLLYLIFAAVEGVMRVI) form a helical membrane-spanning segment. Residues 344-350 (GGSNHLA) are Lumenal-facing. Residues 351–371 (VVLDDIILAVIDSIFVWFIFI) traverse the membrane as a helical segment. Residues 372–396 (SLAQTMKTLRLRKNTVKFSLYRHFK) lie on the Cytoplasmic side of the membrane. Residues 397–417 (NTLIFAVLASIVFMGWTTKTF) form a helical membrane-spanning segment. At 418-429 (RIAKCQSDWMER) the chain is on the lumenal side. A helical transmembrane segment spans residues 430-450 (WVDDAFWSFLFSLILIVIMFL). Topologically, residues 451 to 555 (WRPSANNQRY…EKMFSSEKIM (105 aa)) are cytoplasmic. 4 positions are modified to phosphoserine: S469, S494, S496, and S534.

The protein belongs to the LU7TM family. TMEM87 subfamily.

It localises to the golgi apparatus membrane. In terms of biological role, may be involved in retrograde transport from endosomes to the trans-Golgi network (TGN). This is Transmembrane protein 87B from Homo sapiens (Human).